Consider the following 366-residue polypeptide: Glutamate 5-kinase (366 aa).

ATP is bound at residue K17. S57, D144, and N156 together coordinate substrate. ATP-binding positions include 176 to 177 (SD) and 216 to 222 (TGGMVSK). Positions 278–356 (SGALTLDDGA…SDLPAEMRRP (79 aa)) constitute a PUA domain.

It belongs to the glutamate 5-kinase family.

It is found in the cytoplasm. It carries out the reaction L-glutamate + ATP = L-glutamyl 5-phosphate + ADP. Its pathway is amino-acid biosynthesis; L-proline biosynthesis; L-glutamate 5-semialdehyde from L-glutamate: step 1/2. Its function is as follows. Catalyzes the transfer of a phosphate group to glutamate to form L-glutamate 5-phosphate. The protein is Glutamate 5-kinase of Mycolicibacterium vanbaalenii (strain DSM 7251 / JCM 13017 / BCRC 16820 / KCTC 9966 / NRRL B-24157 / PYR-1) (Mycobacterium vanbaalenii).